The primary structure comprises 506 residues: Maturase K (506 aa).

Belongs to the intron maturase 2 family. MatK subfamily.

The protein resides in the plastid. The protein localises to the chloroplast. In terms of biological role, usually encoded in the trnK tRNA gene intron. Probably assists in splicing its own and other chloroplast group II introns. This chain is Maturase K, found in Pisum sativum (Garden pea).